Here is a 952-residue protein sequence, read N- to C-terminus: Probable RNA-binding protein 19 (952 aa).

The RRM 1 domain occupies 2–79; sequence SRLIVKNLPN…TRITVEFCKS (78 aa). Disordered stretches follow at residues 85 to 126, 159 to 267, and 367 to 395; these read KPRA…LEKL, KAKT…RGAV, and KQAP…EEED. Low complexity predominate over residues 95-109; that stretch reads KSSQPKQPSQDSVPS. Polar residues predominate over residues 163-180; it reads KASSDYLNFDSDSNSDSG. 3 positions are modified to phosphoserine: serine 177, serine 179, and serine 183. 2 stretches are compositionally biased toward acidic residues: residues 181–196 and 224–251; these read QESE…EEEQ and SSED…EEEG. RRM domains follow at residues 293–368 and 400–478; these read YTVK…REKQ and GRLF…PSTI. Lysine 479 participates in a covalent cross-link: Glycyl lysine isopeptide (Lys-Gly) (interchain with G-Cter in SUMO2). The segment at 481–504 is disordered; the sequence is EASQEANAPGSSYKKKKEAMDKAN. In terms of domain architecture, RRM 4 spans 584 to 656; it reads TVILAKNLPA…VPLYLEWAPI (73 aa). The span at 664–679 shows a compositional bias: basic and acidic residues; it reads QKKDSQHEQPAEKAEV. The disordered stretch occupies residues 664–719; the sequence is QKKDSQHEQPAEKAEVEQETVLDPEGEKASVEGAEASTGKMEEEEEEEEEEEEESI. Serine 693 carries the post-translational modification Phosphoserine. Acidic residues predominate over residues 705 to 718; sequence EEEEEEEEEEEEES. RRM domains are found at residues 722–803 and 824–904; these read CTLF…ISER and SKIL…WADS. Residues serine 928 and serine 944 each carry the phosphoserine modification.

This sequence belongs to the RRM MRD1 family. As to expression, expressed in the crypts of Lieberkuhn of the intestine (at protein level).

Its subcellular location is the nucleus. The protein localises to the nucleolus. It is found in the nucleoplasm. It localises to the cytoplasm. The protein resides in the chromosome. Plays a role in embryo pre-implantation development. This Mus musculus (Mouse) protein is Probable RNA-binding protein 19 (Rbm19).